We begin with the raw amino-acid sequence, 308 residues long: Palmitoyltransferase ZDHHC7 (308 aa).

The Cytoplasmic portion of the chain corresponds to 1-50; it reads MQPSGHRLRDIEHHPLLTDNDNYDSASSSSSEADMADRVWFIRDGCGMVC. Residues 51-71 form a helical membrane-spanning segment; sequence AVMTWLLVVYADFVVTFVMLL. At 72-75 the chain is on the lumenal side; sequence PSKD. The chain crosses the membrane as a helical span at residues 76–96; it reads FWYSVVNGVLFNCLAVLALSS. Residues 97-173 lie on the Cytoplasmic side of the membrane; it reads HLRTMLTDPG…NNCVGEKNQR (77 aa). The DHHC domain maps to 130 to 180; the sequence is YKCPKCCCIKPERAHHCSICKRCIRKMDHHCPWVNNCVGEKNQRFFVLFTM. The S-palmitoyl cysteine intermediate role is filled by cysteine 160. A helical transmembrane segment spans residues 174–194; sequence FFVLFTMYIALSSIHALILCG. The Lumenal segment spans residues 195–217; the sequence is LQFISCVRGQWTECSDFSPPITV. Residues 218 to 238 traverse the membrane as a helical segment; that stretch reads ILLVFLCLEGLLFFTFTAVMF. Residues 239-308 lie on the Cytoplasmic side of the membrane; the sequence is GTQIHSICND…TRKGGPEFSV (70 aa).

It belongs to the DHHC palmitoyltransferase family. As to quaternary structure, homooligomers. Heterooligomers with ZDHHC3. Autopalmitoylated. As to expression, widely expressed. Present in Sertoli cells (at protein level).

The protein resides in the golgi apparatus membrane. The enzyme catalyses L-cysteinyl-[protein] + hexadecanoyl-CoA = S-hexadecanoyl-L-cysteinyl-[protein] + CoA. It carries out the reaction L-cysteinyl-[protein] + tetradecanoyl-CoA = S-tetradecanoyl-L-cysteinyl-[protein] + CoA. The catalysed reaction is L-cysteinyl-[protein] + octadecanoyl-CoA = S-octadecanoyl-L-cysteinyl-[protein] + CoA. Golgi-localized palmitoyltransferase that catalyzes the addition of palmitate onto various protein substrates and therefore functions in several unrelated biological processes. Has no stringent fatty acid selectivity and in addition to palmitate can also transfer onto target proteins myristate from tetradecanoyl-CoA and stearate from octadecanoyl-CoA. Palmitoylates sex steroid hormone receptors, including ESR1, PGR and AR, thereby regulating their targeting to the plasma membrane and their function in rapid intracellular signaling upon binding of sex hormones. Palmitoylates GNAQ, a heterotrimeric G protein, regulating its dynamic localization at the plasma membrane and is thereby involved in GNAQ-dependent G protein-coupled receptor signaling pathways. Also functions in ligand-induced cell death by regulating the FAS signaling pathway through the palmitoylation and stabilization of the receptor at the plasma membrane. In epithelial cells, palmitoylates SCRIB and regulates its localization to the plasma membrane, regulating indirectly cell polarity and differentiation. Also palmitoylates JAM3 and promotes its expression at tight junctions and regulates its function in cell migration. Palmitoylates the glucose transporter GLUT4/SLC2A4 and controls the insulin-dependent translocation of GLUT4 to the plasma membrane. In brain, could also palmitoylate SNAP25 and DLG4/PSD95. Could also palmitoylate DNAJC5 and regulate its localization to the Golgi membrane. Could also palmitoylate NCDN. May play a role in follicle stimulation hormone (FSH) activation of testicular Sertoli cells. Activates pyroptosis by catalyzing palmitoylation of gasdermin-D (GSDMD). This Rattus norvegicus (Rat) protein is Palmitoyltransferase ZDHHC7.